The primary structure comprises 342 residues: NADPH-dependent methylglyoxal reductase GRE2 (342 aa).

Residues Gly-7–Ile-12, Arg-32, Lys-36, Asp-57–Ile-58, Tyr-165, Lys-169, Val-199, and Ser-216 contribute to the NADP(+) site. Residue Lys-169 is the Proton donor of the active site. Ser-333 carries the post-translational modification Phosphoserine.

The protein belongs to the NAD(P)-dependent epimerase/dehydratase family. Dihydroflavonol-4-reductase subfamily. In terms of assembly, monomer. In terms of processing, the N-terminus is blocked.

It localises to the cytoplasm. The protein localises to the nucleus. The enzyme catalyses (S)-lactaldehyde + NADP(+) = methylglyoxal + NADPH + H(+). It carries out the reaction 3-methylbutanol + NADP(+) = 3-methylbutanal + NADPH + H(+). The catalysed reaction is 2,5-hexanedione + 2 NADPH + 2 H(+) = (2S,5S)-hexanediol + 2 NADP(+). It catalyses the reaction (S)-3-chloro-1-phenyl-1-propanol + NADP(+) = 3-chloro-1-phenyl-1-propanone + NADPH + H(+). With respect to regulation, activated by glutathione. Its function is as follows. Catalyzes the irreversible reduction of the cytotoxic compound methylglyoxal (MG, 2-oxopropanal) to (S)-lactaldehyde as an alternative to detoxification of MG by glyoxalase I GLO1. MG is synthesized via a bypath of glycolysis from dihydroxyacetone phosphate and is believed to play a role in cell cycle regulation and stress adaptation. Also catalyzes the reduction of 3-methylbutanal to 3-methylbutanol. Acts as a suppressor of 3-methylbutanol-induced filamentation by modulating the levels of 3-methylbutanal, the signal to which cells respond by filamentation. Also involved in ergosterol metabolism. This chain is NADPH-dependent methylglyoxal reductase GRE2 (GRE2), found in Saccharomyces cerevisiae (strain ATCC 204508 / S288c) (Baker's yeast).